We begin with the raw amino-acid sequence, 449 residues long: Xylose isomerase (449 aa).

Catalysis depends on residues H101 and D104. Mg(2+) contacts are provided by E232, E268, H271, D296, D307, D309, and D340.

This sequence belongs to the xylose isomerase family. In terms of assembly, homotetramer. It depends on Mg(2+) as a cofactor.

It localises to the cytoplasm. It catalyses the reaction alpha-D-xylose = alpha-D-xylulofuranose. In Bifidobacterium longum (strain DJO10A), this protein is Xylose isomerase.